The following is a 438-amino-acid chain: Sphingomyelinase phosphodiesterase D (438 aa).

An N-terminal signal peptide occupies residues 1–17; sequence MKIILILVLVLVVSINA. Residues Asp-27 and His-29 each contribute to the Zn(2+) site. N-linked (GlcNAc...) asparagine glycosylation occurs at Asn-40. 2 residues coordinate Zn(2+): Asp-111 and Asn-148. An N-linked (GlcNAc...) asparagine glycan is attached at Asn-160. Residue His-247 coordinates Zn(2+). Asn-271 carries N-linked (GlcNAc...) asparagine glycosylation. Zn(2+) is bound by residues His-287 and His-289. Asn-338 and Asn-359 each carry an N-linked (GlcNAc...) asparagine glycan.

It belongs to the acid sphingomyelinase family. It depends on Zn(2+) as a cofactor.

The protein resides in the secreted. The sequence is that of Sphingomyelinase phosphodiesterase D (sgmD) from Dictyostelium discoideum (Social amoeba).